Reading from the N-terminus, the 276-residue chain is tRNA dimethylallyltransferase (276 aa).

An interaction with substrate tRNA region spans residues 9 to 12 (DSLS).

Belongs to the IPP transferase family. Monomer. Requires Mg(2+) as cofactor.

It catalyses the reaction adenosine(37) in tRNA + dimethylallyl diphosphate = N(6)-dimethylallyladenosine(37) in tRNA + diphosphate. Its function is as follows. Catalyzes the transfer of a dimethylallyl group onto the adenine at position 37 in tRNAs that read codons beginning with uridine, leading to the formation of N6-(dimethylallyl)adenosine (i(6)A). This chain is tRNA dimethylallyltransferase (miaA), found in Helicobacter pylori (strain HPAG1).